Reading from the N-terminus, the 325-residue chain is Lipoyl synthase (325 aa).

The segment at 1-24 (MPIAPDRVRHPEKANRPDNPIQRK) is disordered. [4Fe-4S] cluster is bound by residues Cys-54, Cys-59, Cys-65, Cys-80, Cys-84, Cys-87, and Ser-293. Residues 66-282 (WKKKHATFMI…VTVGRGKGFL (217 aa)) enclose the Radical SAM core domain.

Belongs to the radical SAM superfamily. Lipoyl synthase family. The cofactor is [4Fe-4S] cluster.

Its subcellular location is the cytoplasm. The enzyme catalyses [[Fe-S] cluster scaffold protein carrying a second [4Fe-4S](2+) cluster] + N(6)-octanoyl-L-lysyl-[protein] + 2 oxidized [2Fe-2S]-[ferredoxin] + 2 S-adenosyl-L-methionine + 4 H(+) = [[Fe-S] cluster scaffold protein] + N(6)-[(R)-dihydrolipoyl]-L-lysyl-[protein] + 4 Fe(3+) + 2 hydrogen sulfide + 2 5'-deoxyadenosine + 2 L-methionine + 2 reduced [2Fe-2S]-[ferredoxin]. The protein operates within protein modification; protein lipoylation via endogenous pathway; protein N(6)-(lipoyl)lysine from octanoyl-[acyl-carrier-protein]: step 2/2. Its function is as follows. Catalyzes the radical-mediated insertion of two sulfur atoms into the C-6 and C-8 positions of the octanoyl moiety bound to the lipoyl domains of lipoate-dependent enzymes, thereby converting the octanoylated domains into lipoylated derivatives. This chain is Lipoyl synthase, found in Rhodospirillum centenum (strain ATCC 51521 / SW).